Consider the following 120-residue polypeptide: Small ribosomal subunit protein bS16 (120 aa).

The interval G81–A120 is disordered. The span at E95–K110 shows a compositional bias: basic and acidic residues. The segment covering A111–A120 has biased composition (low complexity).

It belongs to the bacterial ribosomal protein bS16 family.

This is Small ribosomal subunit protein bS16 from Methylorubrum populi (strain ATCC BAA-705 / NCIMB 13946 / BJ001) (Methylobacterium populi).